A 371-amino-acid chain; its full sequence is Diterpene cyclase DtcycA (371 aa).

Mg(2+) contacts are provided by Asn-234, Ser-238, and Glu-242.

It belongs to the terpene synthase family. In terms of assembly, homodimer. Mg(2+) serves as cofactor.

It catalyses the reaction (2E,6E,10E)-geranylgeranyl diphosphate = cembrene C + diphosphate. The catalysed reaction is (2E,6E,10E)-geranylgeranyl diphosphate + H2O = (R)-nephthenol + diphosphate. Functionally, diterpene cyclases that can form multiple diterpene products. This Streptomyces sp protein is Diterpene cyclase DtcycA.